Reading from the N-terminus, the 246-residue chain is 1-(5-phosphoribosyl)-5-[(5-phosphoribosylamino)methylideneamino] imidazole-4-carboxamide isomerase (246 aa).

The active-site Proton acceptor is D7. The active-site Proton donor is the D129.

This sequence belongs to the HisA/HisF family.

The protein localises to the cytoplasm. The enzyme catalyses 1-(5-phospho-beta-D-ribosyl)-5-[(5-phospho-beta-D-ribosylamino)methylideneamino]imidazole-4-carboxamide = 5-[(5-phospho-1-deoxy-D-ribulos-1-ylimino)methylamino]-1-(5-phospho-beta-D-ribosyl)imidazole-4-carboxamide. It participates in amino-acid biosynthesis; L-histidine biosynthesis; L-histidine from 5-phospho-alpha-D-ribose 1-diphosphate: step 4/9. The sequence is that of 1-(5-phosphoribosyl)-5-[(5-phosphoribosylamino)methylideneamino] imidazole-4-carboxamide isomerase from Buchnera aphidicola subsp. Acyrthosiphon pisum (strain 5A).